A 388-amino-acid chain; its full sequence is Protein YnjB (388 aa).

The segment at 333 to 357 (AVWGDPSVLDPQKLPDGQRESLQSR) is disordered.

The protein is Protein YnjB (ynjB) of Escherichia coli (strain K12).